Reading from the N-terminus, the 276-residue chain is Glutamate racemase (276 aa).

Substrate-binding positions include 10–11 and 42–43; these read DS and YG. Residue Cys-74 is the Proton donor/acceptor of the active site. 75-76 is a binding site for substrate; the sequence is NT. The active-site Proton donor/acceptor is Cys-185. 186–187 provides a ligand contact to substrate; sequence TH.

This sequence belongs to the aspartate/glutamate racemases family.

It carries out the reaction L-glutamate = D-glutamate. It participates in cell wall biogenesis; peptidoglycan biosynthesis. In terms of biological role, provides the (R)-glutamate required for cell wall biosynthesis. This is Glutamate racemase from Levilactobacillus brevis (strain ATCC 367 / BCRC 12310 / CIP 105137 / JCM 1170 / LMG 11437 / NCIMB 947 / NCTC 947) (Lactobacillus brevis).